The following is a 143-amino-acid chain: Peptide methionine sulfoxide reductase MsrB (143 aa).

The MsrB domain maps to 16–139 (DAELRRRLTP…NSAALNFESR (124 aa)). Cys-55, Cys-58, Cys-104, and Cys-107 together coordinate Zn(2+). Cys-128 serves as the catalytic Nucleophile.

This sequence belongs to the MsrB Met sulfoxide reductase family. It depends on Zn(2+) as a cofactor.

The enzyme catalyses L-methionyl-[protein] + [thioredoxin]-disulfide + H2O = L-methionyl-(R)-S-oxide-[protein] + [thioredoxin]-dithiol. The sequence is that of Peptide methionine sulfoxide reductase MsrB from Burkholderia ambifaria (strain MC40-6).